The following is a 416-amino-acid chain: 4-hydroxy-3-methylbut-2-en-1-yl diphosphate synthase (flavodoxin) (416 aa).

Cys304, Cys307, Cys350, and Glu357 together coordinate [4Fe-4S] cluster.

Belongs to the IspG family. [4Fe-4S] cluster is required as a cofactor.

The catalysed reaction is (2E)-4-hydroxy-3-methylbut-2-enyl diphosphate + oxidized [flavodoxin] + H2O + 2 H(+) = 2-C-methyl-D-erythritol 2,4-cyclic diphosphate + reduced [flavodoxin]. The protein operates within isoprenoid biosynthesis; isopentenyl diphosphate biosynthesis via DXP pathway; isopentenyl diphosphate from 1-deoxy-D-xylulose 5-phosphate: step 5/6. Its function is as follows. Converts 2C-methyl-D-erythritol 2,4-cyclodiphosphate (ME-2,4cPP) into 1-hydroxy-2-methyl-2-(E)-butenyl 4-diphosphate. The sequence is that of 4-hydroxy-3-methylbut-2-en-1-yl diphosphate synthase (flavodoxin) from Allorhizobium ampelinum (strain ATCC BAA-846 / DSM 112012 / S4) (Agrobacterium vitis (strain S4)).